Reading from the N-terminus, the 175-residue chain is Peptide deformylase (175 aa).

2 residues coordinate Fe cation: Cys99 and His141. Glu142 is an active-site residue. Fe cation is bound at residue His145.

It belongs to the polypeptide deformylase family. Requires Fe(2+) as cofactor.

The enzyme catalyses N-terminal N-formyl-L-methionyl-[peptide] + H2O = N-terminal L-methionyl-[peptide] + formate. Removes the formyl group from the N-terminal Met of newly synthesized proteins. Requires at least a dipeptide for an efficient rate of reaction. N-terminal L-methionine is a prerequisite for activity but the enzyme has broad specificity at other positions. In Rickettsia typhi (strain ATCC VR-144 / Wilmington), this protein is Peptide deformylase.